The chain runs to 157 residues: Protein Smg homolog (157 aa).

This sequence belongs to the Smg family.

The sequence is that of Protein Smg homolog from Aliivibrio fischeri (strain MJ11) (Vibrio fischeri).